The primary structure comprises 119 residues: Hydrogenase maturation factor HypA (119 aa).

His-2 lines the Ni(2+) pocket. Zn(2+) contacts are provided by Cys-73, Cys-76, Cys-89, and Cys-92.

The protein belongs to the HypA/HybF family.

Its function is as follows. Involved in the maturation of [NiFe] hydrogenases. Required for nickel insertion into the metal center of the hydrogenase. The sequence is that of Hydrogenase maturation factor HypA from Dehalococcoides mccartyi (strain ATCC BAA-2266 / KCTC 15142 / 195) (Dehalococcoides ethenogenes (strain 195)).